We begin with the raw amino-acid sequence, 310 residues long: Olfactory receptor 1496 (310 aa).

The Extracellular segment spans residues 1 to 23 (MNNQTFITQFLLLGLPIPEEHQH). Asn-3 carries an N-linked (GlcNAc...) asparagine glycan. Residues 24-48 (LFYALFLVMYLTTILGNLLIIVLVQ) form a helical membrane-spanning segment. Topologically, residues 49–55 (LDSQLHT) are cytoplasmic. Residues 56–77 (PMYLFLSNLSFSDLCFSSVTMP) traverse the membrane as a helical segment. Residues 78–98 (KLLQNMRSQDTSIPYGGCLAQ) are Extracellular-facing. Cys-95 and Cys-187 form a disulfide bridge. A helical transmembrane segment spans residues 99–118 (TYFFMVFGDMESFLLVAMAY). Residues 119 to 137 (DRYVAICFPLHYTSIMSPK) lie on the Cytoplasmic side of the membrane. Residues 138–156 (LCTCLVLLLWMLTTSHAMM) form a helical membrane-spanning segment. Over 157–194 (HTLLAARLSFCENNVVLNFFCDLFVLLKLACSDTYINE) the chain is Extracellular. The chain crosses the membrane as a helical span at residues 195 to 217 (LMIFIMSTLLIIIPFFLIVMSYA). Residues 218–234 (RIISSILKVPSTQGICK) are Cytoplasmic-facing. The chain crosses the membrane as a helical span at residues 235 to 258 (VFSTCGSHLSVVSLFYGTIIGLYL). Residues 259 to 270 (CPAGNNSTVKEM) lie on the Extracellular side of the membrane. The helical transmembrane segment at 271 to 290 (VMAMMYTVVTPMLNPFIYSL) threads the bilayer. The Cytoplasmic portion of the chain corresponds to 291–310 (RNRDMKRALIRVICSMKITL).

The protein belongs to the G-protein coupled receptor 1 family. Olfactory epithelium.

The protein localises to the cell membrane. Functionally, odorant receptor. This Rattus norvegicus (Rat) protein is Olfactory receptor 1496 (Olr1496).